The sequence spans 56 residues: Large ribosomal subunit protein bL33 (56 aa).

It belongs to the bacterial ribosomal protein bL33 family.

This Ehrlichia ruminantium (strain Gardel) protein is Large ribosomal subunit protein bL33.